Consider the following 441-residue polypeptide: Peroxisome proliferator-activated receptor delta (441 aa).

Over residues 1 to 22 (MEQPQEEAPEVREEEEKEEVAE) the composition is skewed to acidic residues. The interval 1–54 (MEQPQEEAPEVREEEEKEEVAEAEGAPELNGGPQHALPSSSYTDLSRSSSPPSL) is disordered. A compositionally biased stretch (low complexity) spans 37 to 54 (LPSSSYTDLSRSSSPPSL). A DNA-binding region (nuclear receptor) is located at residues 71 to 145 (NMECRVCGDK…LGMSHNAIRF (75 aa)). 2 NR C4-type zinc fingers span residues 74-94 (CRVCGDKASGFHYGVHACEGC) and 111-133 (CERSCKIQKKNRNKCQYCRFQKC). An NR LBD domain is found at 211–439 (FVIHDIETLW…HPLLQEIYKD (229 aa)).

It belongs to the nuclear hormone receptor family. NR1 subfamily. As to quaternary structure, heterodimer with the retinoid X receptor. Interacts (via domain NR LBD) with CRY1 and CRY2 in a ligand-dependent manner. Post-translationally, 'Lys-48'-linked polyubiquitinated; leading to proteasomal degradation. Deubiquitinated and stabilized by OTUD3. Ubiquitous with maximal levels in placenta and skeletal muscle.

The protein localises to the nucleus. Functionally, ligand-activated transcription factor key mediator of energy metabolism in adipose tissues. Receptor that binds peroxisome proliferators such as hypolipidemic drugs and fatty acids. Has a preference for poly-unsaturated fatty acids, such as gamma-linoleic acid and eicosapentanoic acid. Once activated by a ligand, the receptor binds to promoter elements of target genes. Regulates the peroxisomal beta-oxidation pathway of fatty acids. Functions as transcription activator for the acyl-CoA oxidase gene. Decreases expression of NPC1L1 once activated by a ligand. The polypeptide is Peroxisome proliferator-activated receptor delta (Homo sapiens (Human)).